The sequence spans 311 residues: Malate dehydrogenase (311 aa).

NAD(+)-binding positions include Gly7–Gly13 and Asp34. The substrate site is built by Arg81 and Arg87. NAD(+) is bound by residues Asn94 and Ile117–Asn119. The substrate site is built by Asn119 and Arg153. His177 serves as the catalytic Proton acceptor. Met227 is an NAD(+) binding site.

The protein belongs to the LDH/MDH superfamily. MDH type 1 family. As to quaternary structure, homodimer.

The catalysed reaction is (S)-malate + NAD(+) = oxaloacetate + NADH + H(+). Catalyzes the reversible oxidation of malate to oxaloacetate. In Aliivibrio salmonicida (strain LFI1238) (Vibrio salmonicida (strain LFI1238)), this protein is Malate dehydrogenase.